Reading from the N-terminus, the 517-residue chain is Amidophosphoribosyltransferase (517 aa).

M1 carries the N-acetylmethionine modification. The propeptide occupies 1–11 (MELEELGIREE). The active-site Nucleophile is C12. The 250-residue stretch at 12 to 261 (CGVFGCIASG…PGEIVEISRH (250 aa)) folds into the Glutamine amidotransferase type-2 domain. C280 provides a ligand contact to [4Fe-4S] cluster. Residues S327, D389, and D390 each coordinate Mg(2+). [4Fe-4S] cluster is bound by residues C426, C503, and C506.

It in the C-terminal section; belongs to the purine/pyrimidine phosphoribosyltransferase family. As to quaternary structure, homotetramer. The cofactor is Mg(2+). [4Fe-4S] cluster serves as cofactor.

The enzyme catalyses 5-phospho-beta-D-ribosylamine + L-glutamate + diphosphate = 5-phospho-alpha-D-ribose 1-diphosphate + L-glutamine + H2O. It participates in purine metabolism; IMP biosynthesis via de novo pathway; N(1)-(5-phospho-D-ribosyl)glycinamide from 5-phospho-alpha-D-ribose 1-diphosphate: step 1/2. In terms of biological role, catalyzes the formation of phosphoribosylamine from phosphoribosylpyrophosphate (PRPP) and glutamine. The sequence is that of Amidophosphoribosyltransferase from Mus musculus (Mouse).